We begin with the raw amino-acid sequence, 387 residues long: MDLVNGLVALSLTHKELGVDELSKVANGVHRVCVSLRQPLFVLHTCNRVEAYLYNPPDEVVEIVKSGYAPYVEKVVERRGVDAARHLFRVAAGLESMLIGETDVLGQLEEAFDRQVRAGYTRELLKTVVERAIRVGKRVRTETGISRGPRGLGSLSILYVKEKIDLTNARVCVIGAGSVGRGLVKELIDAGARRLVVVNRSVEKAADLGVEVWPLSERSVERCLEDFDVVFTAVATFEPIIKSVPRDARVRIIVDMGMPRNTAAGLPVEVVTIDSLRDLADRFNAMRDAEIKKAEEIVEEELVALERLLRIRWVEEVSAKLLEYWFKIAEEEGERAGGLEAKIAARTTVKRTLLPVVNYLKKVAVSDIDEAYRIISVLRLSYGLKDL.

Substrate contacts are provided by residues 45–48 (TCNR), serine 96, 101–103 (ETD), and glutamine 107. Residue cysteine 46 is the Nucleophile of the active site. Position 175-180 (175-180 (GAGSVG)) interacts with NADP(+).

It belongs to the glutamyl-tRNA reductase family. In terms of assembly, homodimer.

The catalysed reaction is (S)-4-amino-5-oxopentanoate + tRNA(Glu) + NADP(+) = L-glutamyl-tRNA(Glu) + NADPH + H(+). Its pathway is porphyrin-containing compound metabolism; protoporphyrin-IX biosynthesis; 5-aminolevulinate from L-glutamyl-tRNA(Glu): step 1/2. Functionally, catalyzes the NADPH-dependent reduction of glutamyl-tRNA(Glu) to glutamate 1-semialdehyde (GSA). In Pyrobaculum arsenaticum (strain DSM 13514 / JCM 11321 / PZ6), this protein is Glutamyl-tRNA reductase 1.